The primary structure comprises 343 residues: MPSPLSLCRYLPRELSPSVDSRSCSIPLVAPRKAGKLFLGTTPPRAPGLPRRLAWFSIDWEQVCLMHRLGSGGFGSVYKATYHGVPVAIKQVNKCTKDLRASQRSFWAELNIARLRHDNIVRVVAASTRTPEDSNSLGTIIMEFGGNVTLHQVIYGATRSPEPLSCREQLSLGKCLKYSLDVVNGLLFLHSQSILHLDLKPANILISEQDVCKISDFGCSQKLQDLRCRQASPHHIGGTYTHQAPEILKGEIATPKADIYSFGITLWQMTTREVPYSGEPQYVQYAVVAYNLRPSLAGAVFTASLTGKTLQNIIQSCWEARALQRPGAELLQRDLKAFRGALG.

The 277-residue stretch at 63-339 (VCLMHRLGSG…LLQRDLKAFR (277 aa)) folds into the Protein kinase domain. Residues 69-77 (LGSGGFGSV) and K90 each bind ATP. The active-site Proton acceptor is the D198.

The protein belongs to the protein kinase superfamily. Ser/Thr protein kinase family. Interacts with MAP2K1/MEK1.

The protein resides in the cytoplasm. The catalysed reaction is L-seryl-[protein] + ATP = O-phospho-L-seryl-[protein] + ADP + H(+). It catalyses the reaction L-threonyl-[protein] + ATP = O-phospho-L-threonyl-[protein] + ADP + H(+). Functionally, serine/threonine kinase involved in the regulation of MAPK signaling. Is an activator of the ERK1/2 signaling cascade playing an essential role in the stimulation of oocyte maturation. The sequence is that of Proto-oncogene serine/threonine-protein kinase mos from Mus musculus (Mouse).